We begin with the raw amino-acid sequence, 108 residues long: MLAERDTLEKNYCELFEVPVDGRSNDGDAMLLQEALRGKDNEIRMLEERLAVSSKNVERLNDELLGANLEANVLGQKLQDLQQEHDKLLERWMQRVRVEVDKMNAQLE.

Residues 28 to 94 (DAMLLQEALR…HDKLLERWMQ (67 aa)) are a coiled coil.

It belongs to the ATG16 family. Homodimer. Part of the ATG5-ATG12/ATG16 complex. Several units of each may be present in this complex.

The protein localises to the preautophagosomal structure membrane. In terms of biological role, stabilizes the ATG5-ATG12 conjugate which is necessary for autophagy. The ATG5-ATG12/ATG16 complex is required for efficient promotion of ATG8-conjugation to phosphatidylethanolamine and ATG8 localization to the pre-autophagosomal structure (PAS). Also recruits ATG3 to the PAS. Involved in endoplasmic reticulum-specific autophagic process and is essential for the survival of cells subjected to severe ER stress. This Candida glabrata (strain ATCC 2001 / BCRC 20586 / JCM 3761 / NBRC 0622 / NRRL Y-65 / CBS 138) (Yeast) protein is Autophagy protein 16 (ATG16).